Consider the following 498-residue polypeptide: Acetyl-coenzyme A carboxylase carboxyl transferase subunit beta, chloroplastic (498 aa).

One can recognise a CoA carboxyltransferase N-terminal domain in the interval Leu228–Thr498. Cys232, Cys235, Cys251, and Cys254 together coordinate Zn(2+). The C4-type zinc finger occupies Cys232–Cys254.

This sequence belongs to the AccD/PCCB family. In terms of assembly, acetyl-CoA carboxylase is a heterohexamer composed of biotin carboxyl carrier protein, biotin carboxylase and 2 subunits each of ACCase subunit alpha and ACCase plastid-coded subunit beta (accD). The cofactor is Zn(2+).

It localises to the plastid. Its subcellular location is the chloroplast stroma. The catalysed reaction is N(6)-carboxybiotinyl-L-lysyl-[protein] + acetyl-CoA = N(6)-biotinyl-L-lysyl-[protein] + malonyl-CoA. It participates in lipid metabolism; malonyl-CoA biosynthesis; malonyl-CoA from acetyl-CoA: step 1/1. Functionally, component of the acetyl coenzyme A carboxylase (ACC) complex. Biotin carboxylase (BC) catalyzes the carboxylation of biotin on its carrier protein (BCCP) and then the CO(2) group is transferred by the transcarboxylase to acetyl-CoA to form malonyl-CoA. The protein is Acetyl-coenzyme A carboxylase carboxyl transferase subunit beta, chloroplastic of Populus trichocarpa (Western balsam poplar).